The primary structure comprises 255 residues: Spectinomycin 9-adenylyltransferase (255 aa).

It catalyses the reaction spectinomycin + ATP = 9-O-adenylylspectinomycin + diphosphate. Its function is as follows. Mediates bacterial resistance to the antibiotic spectinomycin but not streptomycin. The protein is Spectinomycin 9-adenylyltransferase of Enterococcus faecalis (Streptococcus faecalis).